Here is a 163-residue protein sequence, read N- to C-terminus: Iron-sulfur cluster assembly protein 2 (163 aa).

Residues 1–48 constitute a mitochondrion transit peptide; sequence MMMLRQTSRKAYLGLQASPLGLGRRLYHENVIDHFENPRNVGSFNRND.

This sequence belongs to the NifU family. As to quaternary structure, component of the core Fe-S cluster (ISC) assembly machinery. The cofactor is [2Fe-2S] cluster. Mostly expressed in leaves, pollen and flowers.

It localises to the mitochondrion matrix. It participates in cofactor biosynthesis; iron-sulfur cluster biosynthesis. Functionally, scaffold protein for the de novo synthesis of iron-sulfur (Fe-S) clusters within mitochondria, which is required for maturation of both mitochondrial and cytoplasmic [2Fe-2S] and [4Fe-4S] proteins. First, a [2Fe-2S] cluster is transiently assembled on the scaffold protein ISCU (ISU1, ISU2 or ISU3). In a second step, the cluster is released from ISCU, transferred to a glutaredoxin, followed by the formation of mitochondrial [2Fe-2S] proteins, the synthesis of [4Fe-4S] clusters and their target-specific insertion into the recipient apoproteins. Cluster assembly on ISCU depends on the function of the cysteine desulfurase complex NFS1-ISD11, which serves as the sulfur donor for cluster synthesis, the iron-binding protein frataxin as the putative iron donor, and the electron transfer chain comprised of ferredoxin reductase and ferredoxin, which receive their electrons from NADH. The sequence is that of Iron-sulfur cluster assembly protein 2 (ISU2) from Arabidopsis thaliana (Mouse-ear cress).